The primary structure comprises 374 residues: Isopentenyl-diphosphate delta-isomerase (374 aa).

13–14 (RK) lines the substrate pocket. Residues 71–73 (GMT), Ser104, and Asn132 each bind FMN. Residue 104-106 (SQR) coordinates substrate. Gln171 contacts substrate. Glu172 is a binding site for Mg(2+). Residues Lys203, Thr233, 282-284 (GMR), and 303-304 (AL) contribute to the FMN site.

This sequence belongs to the IPP isomerase type 2 family. Homooctamer. Dimer of tetramers. It depends on FMN as a cofactor. Requires NADPH as cofactor. Mg(2+) serves as cofactor.

The protein localises to the cytoplasm. The catalysed reaction is isopentenyl diphosphate = dimethylallyl diphosphate. Its function is as follows. Involved in the biosynthesis of isoprenoids. Catalyzes the 1,3-allylic rearrangement of the homoallylic substrate isopentenyl (IPP) to its allylic isomer, dimethylallyl diphosphate (DMAPP). The sequence is that of Isopentenyl-diphosphate delta-isomerase from Thermococcus onnurineus (strain NA1).